The chain runs to 252 residues: MSDWNPSLYLHFSAERSRPAVELLARVPLENVEYVADLGCGPGNSTALLQQRWPAARITGIDSSPAMIAEARSALPDCQFVEADIRNWQPVQALDLIFANASLQWLPDHYELFPHLVSLLNPQGVLAVQMPDNWLEPTHVLMREVAWEQNYPDRGREPLAGVHAYYDILSEAGCEVDIWRTTYYHQMPSHQAIIDWVTATGLRPWLQDLTESEQQLFLKRYHQMLEEQYPLQENGQILLAFPRLFIVARRME.

It belongs to the methyltransferase superfamily. Tam family.

Its subcellular location is the cytoplasm. The catalysed reaction is trans-aconitate + S-adenosyl-L-methionine = (E)-3-(methoxycarbonyl)pent-2-enedioate + S-adenosyl-L-homocysteine. In terms of biological role, catalyzes the S-adenosylmethionine monomethyl esterification of trans-aconitate. The chain is Trans-aconitate 2-methyltransferase from Escherichia coli (strain ATCC 8739 / DSM 1576 / NBRC 3972 / NCIMB 8545 / WDCM 00012 / Crooks).